The following is a 578-amino-acid chain: Acyl-CoA ligase AKT1 (578 aa).

ATP is bound by residues 210–218 (SSGTSGAQK), 350–355 (QCYGAT), Asp438, Arg457, and Lys554. The interval 281-350 (DVEDLLSIVE…RHHPTWKTKQ (70 aa)) is SBD1. Residues 351–413 (CYGATEAGTA…VSSPSLAIGY (63 aa)) are SBD2. Residues 576–578 (SKI) carry the Peroxisomal targeting signal type 1 motif.

The protein localises to the peroxisome. The protein operates within mycotoxin biosynthesis. In terms of biological role, acyl-CoA ligase; part of the gene clusters that mediate the biosynthesis of the host-selective toxins (HSTs) AK-toxins responsible for Japanese pear black spot disease by the Japanese pear pathotype. AK-toxins are esters of 9,10-epoxy 8-hydroxy 9-methyldecatrienoic acid (EDA). On cellular level, AK-toxins affect plasma membrane of susceptible cells and cause a sudden increase in loss of K(+) after a few minutes of toxin treatment. The acyl-CoA ligase AKT1, the hydrolase AKT2 and enoyl-CoA hydratase AKT3 are all involved in the biosynthesis of the AK-, AF- and ACT-toxin common 9,10-epoxy-8-hydroxy-9-methyl-decatrienoic acid (EDA) structural moiety. Part of the EDA biosynthesis occurs in the peroxisome since these 3 enzymes are localized in peroxisomes. The exact roles of the 3 enzymes, as well as of additional AK-toxin clusters enzymes, including AKT4, AKT6 and AKTS1, have still to be elucidated. The Cytochrome P450 monooxygenase AKT7 on the other side functions to limit production of EDA and AK-toxin, probably via the catalysis of a side reaction of EDA or its precursor. This is Acyl-CoA ligase AKT1 from Alternaria alternata (Alternaria rot fungus).